Here is a 251-residue protein sequence, read N- to C-terminus: Ubiquinone/menaquinone biosynthesis C-methyltransferase UbiE (251 aa).

Residues Thr-74, Asp-92, and Ser-132 each coordinate S-adenosyl-L-methionine.

It belongs to the class I-like SAM-binding methyltransferase superfamily. MenG/UbiE family.

The catalysed reaction is a 2-demethylmenaquinol + S-adenosyl-L-methionine = a menaquinol + S-adenosyl-L-homocysteine + H(+). It catalyses the reaction a 2-methoxy-6-(all-trans-polyprenyl)benzene-1,4-diol + S-adenosyl-L-methionine = a 5-methoxy-2-methyl-3-(all-trans-polyprenyl)benzene-1,4-diol + S-adenosyl-L-homocysteine + H(+). It participates in quinol/quinone metabolism; menaquinone biosynthesis; menaquinol from 1,4-dihydroxy-2-naphthoate: step 2/2. The protein operates within cofactor biosynthesis; ubiquinone biosynthesis. In terms of biological role, methyltransferase required for the conversion of demethylmenaquinol (DMKH2) to menaquinol (MKH2) and the conversion of 2-polyprenyl-6-methoxy-1,4-benzoquinol (DDMQH2) to 2-polyprenyl-3-methyl-6-methoxy-1,4-benzoquinol (DMQH2). The polypeptide is Ubiquinone/menaquinone biosynthesis C-methyltransferase UbiE (Rubrivivax gelatinosus (strain NBRC 100245 / IL144)).